A 1462-amino-acid chain; its full sequence is DNA polymerase III PolC-type (1462 aa).

Residues 424–580 enclose the Exonuclease domain; that stretch reads YVVFDVETTG…YDAEATGRLL (157 aa).

It belongs to the DNA polymerase type-C family. PolC subfamily.

The protein localises to the cytoplasm. The catalysed reaction is DNA(n) + a 2'-deoxyribonucleoside 5'-triphosphate = DNA(n+1) + diphosphate. Its function is as follows. Required for replicative DNA synthesis. This DNA polymerase also exhibits 3' to 5' exonuclease activity. In Streptococcus sanguinis (strain SK36), this protein is DNA polymerase III PolC-type.